Reading from the N-terminus, the 517-residue chain is Sugar transport protein MST1 (517 aa).

Residues 1–25 are Cytoplasmic-facing; the sequence is MAGGVIVANDGDGSAVDHGGRLTFS. Residues 26-46 form a helical membrane-spanning segment; sequence VVITCLVAASGGLIFGYDVGI. Residues 47-83 lie on the Extracellular side of the membrane; the sequence is SGGVSTMEPFLRRFFPGVVRRMAEARPGNEYCVYDSQ. A helical transmembrane segment spans residues 84–104; it reads ALTAFTSSLYVAGLVASLVAS. Over 105–120 the chain is Cytoplasmic; the sequence is RVTRAMGRQAVMVMGG. A helical membrane pass occupies residues 121–141; sequence ALFFAGGAVTGFAVNIAMLIV. Residues 142–143 are Extracellular-facing; the sequence is GR. A helical transmembrane segment spans residues 144–164; it reads MLLGFGVGFTNQAAPLFLAEM. At 165–170 the chain is on the cytoplasmic side; sequence APTRWR. Residues 171–191 traverse the membrane as a helical segment; sequence GSLTAGFQFFLAVGVVIATVT. Residues 192 to 203 lie on the Extracellular side of the membrane; sequence NYFASRVPWGWR. A helical membrane pass occupies residues 204 to 224; the sequence is LSLGLAGAPAVVIFLGALFLT. Over 225–288 the chain is Cytoplasmic; the sequence is DTPSSLVMRG…AARREYRPYL (64 aa). A helical membrane pass occupies residues 289–309; that stretch reads VFAVAMPMFFQLTGVIVISFF. Residues 310-325 lie on the Extracellular side of the membrane; sequence SPLVFRTVGFGSNAAL. A helical membrane pass occupies residues 326–346; the sequence is MGNVILGAVNLVCLMLSTLVI. The Cytoplasmic segment spans residues 347 to 352; sequence DRYGRK. A helical transmembrane segment spans residues 353 to 373; that stretch reads VLFMVGGAIMIIAQVGVAWIM. Over 374–389 the chain is Extracellular; sequence GAQVGKNGSEAMARPY. A helical transmembrane segment spans residues 390 to 410; it reads AVAVVAFTCLHTAGFGWSWGP. At 411–430 the chain is on the cytoplasmic side; it reads LGWVIPGEIFPVDIRSAGQA. Residues 431-451 form a helical membrane-spanning segment; sequence MNVSIGLGLTFVQTQSFLAML. The Extracellular portion of the chain corresponds to 452 to 456; it reads CRFRY. The chain crosses the membrane as a helical span at residues 457 to 477; the sequence is GTFAYYAAWVAVMTVFIAVFL. Topologically, residues 478–517 are cytoplasmic; that stretch reads PETKGVPLESMATVWARHWYWKRFAREQPKTSADEPTGTY.

Belongs to the major facilitator superfamily. Sugar transporter (TC 2.A.1.1) family.

It is found in the membrane. Mediates active uptake of hexoses by sugar:proton symport. The chain is Sugar transport protein MST1 from Oryza sativa subsp. japonica (Rice).